Here is a 304-residue protein sequence, read N- to C-terminus: Cell surface-binding protein OPG105 (304 aa).

One can recognise an Alpha-carbonic anhydrase domain in the interval 1-235 (MPQQLSPINI…NDDTQVYYSG (235 aa)). The Virion surface segment spans residues 1-275 (MPQQLSPINI…YQKYIEENKT (275 aa)). Residues 276–294 (FAIIAIVFVFILTAILFFM) traverse the membrane as a helical segment. Residues 295-304 (SRRYSREKQN) lie on the Intravirion side of the membrane.

Belongs to the alpha-carbonic anhydrase family. In terms of assembly, homodimer; disulfide-linked. Apparently non-glycosylated.

It localises to the virion membrane. In terms of biological role, binds to chondroitin sulfate on the cell surface to provide virion attachment to target cell. This Bos taurus (Bovine) protein is Cell surface-binding protein OPG105 (OPG105).